The sequence spans 320 residues: Methionyl-tRNA formyltransferase (320 aa).

114-117 (SLLP) serves as a coordination point for (6S)-5,6,7,8-tetrahydrofolate.

The protein belongs to the Fmt family.

The enzyme catalyses L-methionyl-tRNA(fMet) + (6R)-10-formyltetrahydrofolate = N-formyl-L-methionyl-tRNA(fMet) + (6S)-5,6,7,8-tetrahydrofolate + H(+). In terms of biological role, attaches a formyl group to the free amino group of methionyl-tRNA(fMet). The formyl group appears to play a dual role in the initiator identity of N-formylmethionyl-tRNA by promoting its recognition by IF2 and preventing the misappropriation of this tRNA by the elongation apparatus. The protein is Methionyl-tRNA formyltransferase of Acinetobacter baumannii (strain SDF).